The following is a 953-amino-acid chain: MTAAENVCYTLINVPMDSEPPSEISLKNDLEKGDVKSKTEALKKVIIMILNGEKLPGLLMTIIRFVLPLQDHTIKKLLLVFWEIVPKTTPDGRLLHEMILVCDAYRKDLQHPNEFIRGSTLRFLCKLKEAELLEPLMPAIRACLEHRHSYVRRNAVLAIYTIYRNFEHLIPDAPELIHDFLVNEKDASCKRNAFMMLIHADQDRALDYLSTCIDQVQTFGDILQLVIVELIYKVCHANPSERARFIRCIYNLLQSSSPAVKYEAAGTLVTLSSAPTAIKAAAQCYIDLIIKESDNNVKLIVLDRLIELKEHPAHERVLQDLVMDILRVLSTPDLEVRKKTLQLALDLVSSRNVEELVIVLKKEVIKTNNVSEHEDTDKYRQLLVRTLHSCSVRFPDMAANVIPVLMEFLSDSNEAAAADVLEFVREAIQRFDNLRMLIVEKMLEVFHAIKSVKIYRGALWILGEYCSTKDDIQSVMTEVRRSLGEIPIVESEIKKEAGELKPEEEITVGPVQKLVTEMGTYATQSALSSSRPTKKEEERPPLRGFLLDGDFFVAASLATTLTKIALRYVALVQEKKKQNSFVAEAMLLMATILHLGKSSLPKKPITDDDVDRISLCLKVLSECSPLMNDIFNKECRQSLSHMLSAKLEEEKLSQKKESEKRNVTVQPDDPISFMQLTAKNEMNCKEDQFQLSLLAAMGNTQRKEAADPLASKLNKVTQLTGFSDPVYAEAYVHVNQYDIVLDVLVVNQTSDTLQNCTLELATLGDLKLVEKPSPLTLAPHDFANIKANVKVASTENGIIFGNIVYDVSGAASDRNCVVLSDIHIDIMDYIQPATCTDAEFRQMWAEFEWENKVTVNTNIVDLNDYLQHILKSTNMKCLTPEKALSGYCGFMAANLYARSIFGEDALANVSIEKPIQQGPEAPVTGHIRIRAKSQGMALSLGDKINLSQKKNSI.

Threonine 2 carries the post-translational modification N-acetylthreonine. 6 HEAT repeats span residues 96 to 131, 132 to 168, 240 to 276, 277 to 314, 316 to 353, and 396 to 433; these read HEMI…KEAE, LLEP…NFEH, SERA…SAPT, AIKA…HPAH, RVLQ…SRNV, and DMAA…RFDN. Lysine 494 carries the N6-acetyllysine modification.

Oligomeric complex that consists of at least the alpha, beta, beta', gamma, delta, epsilon and zeta subunits. Interacts with ARF1 (myristoylated); this interaction is required for binding of COPB1 to Golgi membranes. Interacts with CAPN8 and PRKCE. Interacts with SCYL1. Interacts with COPG1. Interacts (via trunk domain) with ARF1 (via switch I region); the interaction is direct. Interacts with KCNK2 (via N-terminus); this interaction increases the channel-mediated whole cell currents and promotes plasma membrane expression of KCNK2. Interacts with STX17. Interacts with TMEM115. Interacts with TMEM41B. Post-translationally, proteolytically cleaved between Ser-528 and Ser-529 by CAPN8.

The protein resides in the cytoplasm. The protein localises to the cytosol. It localises to the golgi apparatus membrane. Its subcellular location is the cytoplasmic vesicle. It is found in the COPI-coated vesicle membrane. The protein resides in the cell membrane. The protein localises to the endoplasmic reticulum-Golgi intermediate compartment. In terms of biological role, the coatomer is a cytosolic protein complex that binds to dilysine motifs and reversibly associates with Golgi non-clathrin-coated vesicles, which further mediate biosynthetic protein transport from the ER, via the Golgi up to the trans Golgi network. Coatomer complex is required for budding from Golgi membranes, and is essential for the retrograde Golgi-to-ER transport of dilysine-tagged proteins. In mammals, the coatomer can only be recruited by membranes associated to ADP-ribosylation factors (ARFs), which are small GTP-binding proteins; the complex also influences the Golgi structural integrity, as well as the processing, activity, and endocytic recycling of LDL receptors. Involved in the Golgi disassembly and reassembly processes during cell cycle. Plays a functional role in facilitating the transport of kappa-type opioid receptor mRNAs into axons and enhances translation of these proteins. Required for limiting lipid storage in lipid droplets. Involved in lipid homeostasis by regulating the presence of perilipin family members PLIN2 and PLIN3 at the lipid droplet surface and promoting the association of adipocyte surface triglyceride lipase (PNPLA2) with the lipid droplet to mediate lipolysis. Involved in autophagy by playing a role in early endosome function. Plays a role in organellar compartmentalization of secretory compartments including endoplasmic reticulum (ER)-Golgi intermediate compartment (ERGIC), Golgi, trans-Golgi network (TGN) and recycling endosomes, and in biosynthetic transport of CAV1. The polypeptide is Coatomer subunit beta (COPB1) (Bos taurus (Bovine)).